The sequence spans 106 residues: Large ribosomal subunit protein uL22 (106 aa).

It belongs to the universal ribosomal protein uL22 family. Part of the 50S ribosomal subunit.

Functionally, this protein binds specifically to 23S rRNA; its binding is stimulated by other ribosomal proteins, e.g. L4, L17, and L20. It is important during the early stages of 50S assembly. It makes multiple contacts with different domains of the 23S rRNA in the assembled 50S subunit and ribosome. Its function is as follows. The globular domain of the protein is located near the polypeptide exit tunnel on the outside of the subunit, while an extended beta-hairpin is found that lines the wall of the exit tunnel in the center of the 70S ribosome. In Nautilia profundicola (strain ATCC BAA-1463 / DSM 18972 / AmH), this protein is Large ribosomal subunit protein uL22.